The primary structure comprises 672 residues: Putative per-hexamer repeat protein 5 (672 aa).

7 stretches are compositionally biased toward gly residues: residues 141–161 (TGTGTGTGTGTGTGTGTGTGT), 171–191 (TDRGTGTGTGTGTGTGTGTGT), 215–233 (TGTGTGTGTGTGTGTGTDT), 243–263 (TGTGTGTGTGTGTGTGTGTGT), 273–295 (TDRGTGTGTGTGTGTGTGTGTGT), 303–355 (TGTG…GSGS), and 365–389 (TGTGTGTDTGTGTGTGTGTGTGSGS). Disordered regions lie at residues 141 to 193 (TGTG…GTGT) and 213 to 672 (TGTG…TGTA). Residues 390 to 424 (GTAKVTGTATTTATVTETGTAKVTGTDTGTAKVTG) show a composition bias toward low complexity. Residues 425 to 469 (TGTGTGTGTGTGTGTGTGTGTGTGTGTGTGTGTGTGTGTGTGSGS) show a composition bias toward gly residues. Positions 470–486 (GTAKVTGTDTGTAKVTG) are enriched in low complexity. Positions 487–537 (TGTGTGTGTGTGTGTGTGTGTGTGSGSGSGSGSGSGSGTGTGTGLGSGSGS) are enriched in gly residues. Residues 538 to 552 (GTAKVTGTGTAKVTG) show a composition bias toward low complexity. Positions 553–617 (TGTGTGTGTG…GTGTGTGTGT (65 aa)) are enriched in gly residues. Residues 618-636 (GTSTVTVRGTGTGTATATG) are compositionally biased toward low complexity. Composition is skewed to gly residues over residues 637–653 (TGTGTGTGTGTGTGTGT) and 663–672 (RGTGTGTGTA).

This Mus musculus (Mouse) protein is Putative per-hexamer repeat protein 5 (Phxr5).